A 192-amino-acid polypeptide reads, in one-letter code: Small ribosomal subunit protein uS5 (192 aa).

The S5 DRBM domain maps to 20 to 83; it reads FVDKLVHINR…EAAKRGLIRV (64 aa). Residues 162–192 are disordered; it reads SVAARRGLKVSALQARRRDADPADTSEAAVA.

It belongs to the universal ribosomal protein uS5 family. Part of the 30S ribosomal subunit. Contacts proteins S4 and S8.

Its function is as follows. With S4 and S12 plays an important role in translational accuracy. In terms of biological role, located at the back of the 30S subunit body where it stabilizes the conformation of the head with respect to the body. The protein is Small ribosomal subunit protein uS5 of Methylorubrum extorquens (strain CM4 / NCIMB 13688) (Methylobacterium extorquens).